We begin with the raw amino-acid sequence, 277 residues long: Carbonyl reductase [NADPH] 1 (277 aa).

Position 2 is an N-acetylserine (Ser2). 2 positions are modified to phosphoserine: Ser2 and Ser30. NADP(+) contacts are provided by residues 10 to 34 (VTGA…GDVV), 63 to 64 (DI), and Asn90. Residues 95–97 (FKT) and Gln106 each bind glutathione. Ser140 lines the substrate pocket. 193 to 194 (AY) lines the glutathione pocket. The active-site Proton acceptor is Tyr194. Residues 194 to 198 (YGVTK) and 231 to 233 (VRT) each bind NADP(+). An N6-1-carboxyethyl lysine modification is found at Lys239.

It belongs to the short-chain dehydrogenases/reductases (SDR) family. As to quaternary structure, monomer.

It localises to the cytoplasm. It catalyses the reaction a secondary alcohol + NADP(+) = a ketone + NADPH + H(+). It carries out the reaction prostaglandin F2alpha + NADP(+) = prostaglandin E2 + NADPH + H(+). The catalysed reaction is prostaglandin E1 + NADP(+) = 15-oxoprostaglandin E1 + NADPH + H(+). The enzyme catalyses menadione + NADPH + H(+) = menadiol + NADP(+). It catalyses the reaction prostaglandin D2 + NADP(+) = 15-oxoprostaglandin D2 + NADPH + H(+). It carries out the reaction prostaglandin E2 + NADP(+) = 15-oxoprostaglandin E2 + NADPH + H(+). The catalysed reaction is prostaglandin F2alpha + NADP(+) = 15-oxoprostaglandin F2alpha + NADPH + H(+). The enzyme catalyses daunorubicin + NADPH + H(+) = 13-dihydrodaunorubicin + NADP(+). It catalyses the reaction S-nitrosoglutathione + NADPH + H(+) = S-(hydroxysulfenamide)glutathione + NADP(+). It carries out the reaction a primary alcohol + NADP(+) = an aldehyde + NADPH + H(+). The catalysed reaction is cortisol + NADPH + H(+) = 20beta-dihydrocortisol + NADP(+). The enzyme catalyses corticosterone + NADPH + H(+) = 20beta-dihydrocorticosterone + NADP(+). Functionally, NADPH-dependent reductase with broad substrate specificity. Catalyzes the reduction of a wide variety of carbonyl compounds including quinones, prostaglandins, menadione, plus various xenobiotics. Catalyzes the reduction of the antitumor anthracyclines doxorubicin and daunorubicin to the cardiotoxic compounds doxorubicinol and daunorubicinol. Can convert prostaglandin E to prostaglandin F2-alpha. Can bind glutathione, which explains its higher affinity for glutathione-conjugated substrates. Catalyzes the reduction of S-nitrosoglutathione. In addition, participates in the glucocorticoid metabolism by catalyzing the NADPH-dependent cortisol/corticosterone into 20beta-dihydrocortisol (20b-DHF) or 20beta-corticosterone (20b-DHB), which are weak agonists of NR3C1 and NR3C2 in adipose tissue. This is Carbonyl reductase [NADPH] 1 from Bos taurus (Bovine).